A 459-amino-acid chain; its full sequence is MKNAREIWRNVLSVIEEEERTPKASFDMWLKSTEGISLMGTTLVVSAPASFIVTWLERQYLSLLQDTVEEITNNKLEIHFIEESQAHKYAPADGSSNESIAVTETKEQPVLLPSKEEGDLGQLNDKYIFETFVIGSGNRFAHAASLAVAEAPARAYNPLFIYGGVGLGKTHLMHAIGHYVKGQKPGARIAYVSSEKFTNEFINSIRDNKTGEFRNRYRNIDVLLIDDIQFLAGKEQTQEEFFHTFNALHNDQKQIVISSDRPPKEIPTLEDRLRSRFEWGLITDITPPDLETRIAILRKKATAEGLDISNEVMLYIANQIDTNIRELEGALTRVVAYAKLVGRPIDPDVAAEALHNIMPVQEAKKIVIRDIQEVVGQHFNIQVEELNSKKRTKTLAFPRQIAMYLSREMTESSLPKIGEEFGGRDHTTVIHAHEKISTLLKNDVEMQETIQTLKKALSN.

The interval 1 to 83 is domain I, interacts with DnaA modulators; it reads MKNAREIWRN…NKLEIHFIEE (83 aa). Residues 83–121 form a domain II region; it reads ESQAHKYAPADGSSNESIAVTETKEQPVLLPSKEEGDLG. Residues 122–338 form a domain III, AAA+ region region; that stretch reads QLNDKYIFET…GALTRVVAYA (217 aa). ATP-binding residues include G166, G168, K169, and T170. Positions 339–459 are domain IV, binds dsDNA; the sequence is KLVGRPIDPD…IQTLKKALSN (121 aa).

Belongs to the DnaA family. In terms of assembly, oligomerizes as a right-handed, spiral filament on DNA at oriC.

It localises to the cytoplasm. Plays an essential role in the initiation and regulation of chromosomal replication. ATP-DnaA binds to the origin of replication (oriC) to initiate formation of the DNA replication initiation complex once per cell cycle. Binds the DnaA box (a 9 base pair repeat at the origin) and separates the double-stranded (ds)DNA. Forms a right-handed helical filament on oriC DNA; dsDNA binds to the exterior of the filament while single-stranded (ss)DNA is stabiized in the filament's interior. The ATP-DnaA-oriC complex binds and stabilizes one strand of the AT-rich DNA unwinding element (DUE), permitting loading of DNA polymerase. After initiation quickly degrades to an ADP-DnaA complex that is not apt for DNA replication. Binds acidic phospholipids. The chain is Chromosomal replication initiator protein DnaA from Exiguobacterium sp. (strain ATCC BAA-1283 / AT1b).